We begin with the raw amino-acid sequence, 366 residues long: Flagellar P-ring protein (366 aa).

The N-terminal stretch at 1-20 (MVIKFLSALILLLVTTAVQA) is a signal peptide.

This sequence belongs to the FlgI family. The basal body constitutes a major portion of the flagellar organelle and consists of four rings (L,P,S, and M) mounted on a central rod.

It is found in the periplasm. The protein localises to the bacterial flagellum basal body. Functionally, assembles around the rod to form the L-ring and probably protects the motor/basal body from shearing forces during rotation. The polypeptide is Flagellar P-ring protein (Escherichia coli O6:H1 (strain CFT073 / ATCC 700928 / UPEC)).